Consider the following 214-residue polypeptide: MRAELAVYFIAGTQDIVRGTLPSVLEEALKAGITCFQYREKGAGALQTASERKEMALECQQLCAKYQVPFIINDDVALALEIGADGIHVGQNDEEIRQVIASCAGKMKIGLSVHSVSEAEEAERLGSVDYIGVGPIFPTISKADAEPVSGTAILEEIRRAGIKLPIVGIGGINETNSAEVLTAGADGVSVISAITRSEDCQSVIKQLKNPGSPS.

4-amino-2-methyl-5-(diphosphooxymethyl)pyrimidine is bound by residues 37 to 41 (QYREK) and N73. Residues D74 and D93 each coordinate Mg(2+). S112 is a 4-amino-2-methyl-5-(diphosphooxymethyl)pyrimidine binding site. 139–141 (TIS) provides a ligand contact to 2-[(2R,5Z)-2-carboxy-4-methylthiazol-5(2H)-ylidene]ethyl phosphate. K142 serves as a coordination point for 4-amino-2-methyl-5-(diphosphooxymethyl)pyrimidine. 2-[(2R,5Z)-2-carboxy-4-methylthiazol-5(2H)-ylidene]ethyl phosphate is bound by residues G171 and 191-192 (IS).

The protein belongs to the thiamine-phosphate synthase family. Requires Mg(2+) as cofactor.

It carries out the reaction 2-[(2R,5Z)-2-carboxy-4-methylthiazol-5(2H)-ylidene]ethyl phosphate + 4-amino-2-methyl-5-(diphosphooxymethyl)pyrimidine + 2 H(+) = thiamine phosphate + CO2 + diphosphate. The enzyme catalyses 2-(2-carboxy-4-methylthiazol-5-yl)ethyl phosphate + 4-amino-2-methyl-5-(diphosphooxymethyl)pyrimidine + 2 H(+) = thiamine phosphate + CO2 + diphosphate. The catalysed reaction is 4-methyl-5-(2-phosphooxyethyl)-thiazole + 4-amino-2-methyl-5-(diphosphooxymethyl)pyrimidine + H(+) = thiamine phosphate + diphosphate. The protein operates within cofactor biosynthesis; thiamine diphosphate biosynthesis; thiamine phosphate from 4-amino-2-methyl-5-diphosphomethylpyrimidine and 4-methyl-5-(2-phosphoethyl)-thiazole: step 1/1. Its function is as follows. Condenses 4-methyl-5-(beta-hydroxyethyl)thiazole monophosphate (THZ-P) and 2-methyl-4-amino-5-hydroxymethyl pyrimidine pyrophosphate (HMP-PP) to form thiamine monophosphate (TMP). In Listeria innocua serovar 6a (strain ATCC BAA-680 / CLIP 11262), this protein is Thiamine-phosphate synthase.